The following is a 1456-amino-acid chain: ABC-type transporter eriD (1456 aa).

Positions 1–65 (MAENEKVTYG…DPRMDPLSGK (65 aa)) are disordered. Over residues 30-40 (SMTNASRSSVY) the composition is skewed to polar residues. Residues 118–372 (LDIPGLARDI…FIDMGFECPP (255 aa)) form the ABC transporter 1 domain. 6 helical membrane-spanning segments follow: residues 481-501 (NFLT…SIFY), 515-535 (ALLF…ILQI), 561-581 (VLCD…VLYF), 590-610 (GAFF…SMIF), 623-643 (AMAP…FTIP), and 734-754 (ILFG…EFIA). The segment at 775 to 799 (EGASEDEEAGTGSTGTRTQEEPVDK) is disordered. Residues 813–1056 (FHWEDVIYDI…IIDYFEGQGA (244 aa)) form the ABC transporter 2 domain. Residue 849 to 856 (GASGAGKT) participates in ATP binding. 7 consecutive transmembrane segments (helical) span residues 1148-1168 (YIYS…FSFF), 1184-1204 (VFMG…HFVT), 1233-1253 (LPWN…PVGM), 1269-1289 (LMFL…HMLI), 1301-1321 (IASL…GPSG), 1337-1357 (PFTY…PAFC), and 1423-1443 (FGFL…FYWL).

It belongs to the ABC transporter superfamily. ABCG family. PDR (TC 3.A.1.205) subfamily.

The protein localises to the membrane. Its function is as follows. ABC-type transporter; part of the gene cluster that mediates the biosynthesis of erinacines, cyathane-xylosides that show unique biological activities, including leishmanicidal activity, stimulating activity for nerve growth-factor synthesis, and agonistic activity toward the kappa opioid receptor. The sequence is that of ABC-type transporter eriD from Hericium erinaceus (Lion's mane mushroom).